An 874-amino-acid polypeptide reads, in one-letter code: Cellulose synthase catalytic subunit [UDP-forming] (874 aa).

4 consecutive transmembrane segments (helical) span residues 30 to 50, 151 to 171, 173 to 193, and 230 to 250; these read SPFSAALGCLWTILAWIVFPL, ILGVIVTFSLILALICITQPF, PLSQFIFLLLLWGVALLVRRM, and LVCGLILLFAETYAWIVLVLG. A catalytic subdomain A region spans residues 271-364; it reads QWPTVDIFVP…FVAIFDCDHV (94 aa). D313 is a catalytic residue. Positions 360 and 362 each coordinate substrate. Positions 441 to 501 are catalytic subdomain B; the sequence is KPLDEIGGIA…GQRIRWARGM (61 aa). D457 is an active-site residue. Helical transmembrane passes span 525 to 545, 547 to 567, 592 to 612, 634 to 654, and 668 to 688; these read LNAMFHFLSGIPRLIFLTAPL, FLLLHAYIIYAPALMIALFVI, IYETVLAWYIAPPTLVALINP, VISRPYIFLVLLNLLGVAAGV, and VIVSLVWVFYNLVILGGAVAV. Residues 694–790 form the PilZ domain; sequence QVRRAHRVEI…QHIDFVQCTF (97 aa). The helical transmembrane segment at 833 to 853 threads the bilayer; it reads SVKVIFRSLTALIAWIVSFIP.

Belongs to the glycosyltransferase 2 family. The cofactor is Mg(2+).

Its subcellular location is the cell inner membrane. It carries out the reaction [(1-&gt;4)-beta-D-glucosyl](n) + UDP-alpha-D-glucose = [(1-&gt;4)-beta-D-glucosyl](n+1) + UDP + H(+). It participates in glycan metabolism; bacterial cellulose biosynthesis. Activated by bis-(3'-5') cyclic diguanylic acid (c-di-GMP). Catalytic subunit of cellulose synthase. It polymerizes uridine 5'-diphosphate glucose to cellulose, which is produced as an extracellular component for mechanical and chemical protection at the onset of the stationary phase, when the cells exhibit multicellular behavior (rdar morphotype). Coexpression of cellulose and thin aggregative fimbriae leads to a hydrophobic network with tightly packed cells embedded in a highly inert matrix. This chain is Cellulose synthase catalytic subunit [UDP-forming] (bcsA), found in Salmonella typhi.